The primary structure comprises 142 residues: uncharacterized protein (142 aa).

2 helical membrane passes run 12-29 (NAIL…YGLL) and 44-66 (IYGQ…GVTA).

The protein resides in the cell membrane. This is an uncharacterized protein from Archaeoglobus fulgidus (strain ATCC 49558 / DSM 4304 / JCM 9628 / NBRC 100126 / VC-16).